A 262-amino-acid chain; its full sequence is Ubiquinone biosynthesis protein COQ4, mitochondrial (262 aa).

Residues H154, D155, H158, and E170 each coordinate Zn(2+). The segment at 243 to 262 (LGIEQPPDLRQMKKDMAKKK) is disordered. A compositionally biased stretch (basic and acidic residues) spans 252-262 (RQMKKDMAKKK).

Belongs to the COQ4 family. In terms of assembly, component of a multi-subunit COQ enzyme complex, composed of at least COQ3, COQ4, COQ5, COQ6, COQ7 and COQ9. It depends on Zn(2+) as a cofactor.

The protein localises to the mitochondrion inner membrane. It carries out the reaction a 4-hydroxy-3-methoxy-5-(all-trans-polyprenyl)benzoate + H(+) = a 2-methoxy-6-(all-trans-polyprenyl)phenol + CO2. It functions in the pathway cofactor biosynthesis; ubiquinone biosynthesis. Its function is as follows. Lyase that catalyzes the C1-decarboxylation of 4-hydroxy-3-methoxy-5-(all-trans-polyprenyl)benzoic acid into 2-methoxy-6-(all-trans-polyprenyl)phenol during ubiquinone biosynthesis. The sequence is that of Ubiquinone biosynthesis protein COQ4, mitochondrial from Yarrowia lipolytica (strain CLIB 122 / E 150) (Yeast).